A 206-amino-acid chain; its full sequence is Emopamil-binding protein-like (206 aa).

Transmembrane regions (helical) follow at residues 10–30, 42–62, 101–121, and 165–185; these read EAGS…ALGL, WVLA…GAFV, LEIL…YAIV, and LWVY…LLLW. Positions 39–184 constitute an EXPERA domain; that stretch reads VERWVLAWLC…LWVLIPGLLL (146 aa).

The protein belongs to the EBP family. In terms of assembly, homodimer.

It is found in the endoplasmic reticulum membrane. Its function is as follows. Does not possess sterol isomerase activity and does not bind sigma ligands. This chain is Emopamil-binding protein-like (Ebpl), found in Mus musculus (Mouse).